The primary structure comprises 932 residues: MGSNNGRAMKLALVPLPKGSVLLPGVTLRIPVSNRPDLANLLSALLDQTNLGKRDGNTITFGCVPLRSPLLSNDGQQLIDDGSVDGAKKEEFDAIDAGQARKEDLFRYGTVGKVIGVQRRAYAEPFLVVQGVQRFTIKHILRERPFFEGEVVLHNERDAISSDAETVELFQQLRQLSRELITLLRLSSLLPSTGTRLSPLVARKFEVYIAKTDLSQAGNLADFMADVADPTFEEKLRVLASFALRTRLERVVELLARQVQGIKNSVKVTTISTSSFPSNSPFDISQIDPRDRELLARRVMAGLTGLTPPGAAGGRNNEDEKETNEVDELQKRLQEAELSPEARKVADKELRRLRKMNPANAEYGVCRTYLENIADIPWTKVTEDKLGPETLKRARNQLDEDHYGLETIKKRLLEYLAVLRLKQSTNQDVERQIAALTKELDAANEVLAEKDVPALSESDRVSLEAKLNLLQSRRLADKSPILLLVGPPGTGKTSLARSVATSLGRKFHRISLGGVRDEAEIRGHRRTYVAAMPGLIVNGLKKVGVANPVFLLDEIDKVGGANFQGDPSAAMLEVLDPEQNSTFVDHYINIPIDLSKVLFIATANSLDTIPAPLLDRMETITLSGYTTVEKRHIAKRHLIPKQIRANGLAEGQVVLSDEVVDKVITSYTRESGVRNLERELGSICRHKAVQYADAVDNGRLDTYNPVVALGDLEDILGIERFDEEIAEKHGRPGVVTGLVAYSTGGQGSILFIEVADMPGNGRVQLTGKLGDVLKESVEVALTWVKAHSFELGLTHDPNEDIMKNRSLHVHCPAGAIPKDGPSAGLAHTIGLISLFTGKAVPPQIAMTGEVSLRGRVMPVGGIKEKLIGAHRAGVKTVLLPEQNRKDVKDVPQEVHDGLQIVYVRHIWEAIRQVWPGAHWPGQHHINFVESRL.

One can recognise a Lon N-terminal domain in the interval 11–259 (LALVPLPKGS…RVVELLARQV (249 aa)). A disordered region spans residues 304 to 340 (TGLTPPGAAGGRNNEDEKETNEVDELQKRLQEAELSP). Over residues 328–340 (ELQKRLQEAELSP) the composition is skewed to basic and acidic residues. 486–493 (GPPGTGKT) serves as a coordination point for ATP. A Lon proteolytic domain is found at 729 to 916 (HGRPGVVTGL…WEAIRQVWPG (188 aa)). Active-site residues include Ser-822 and Lys-865. A Microbody targeting signal motif is present at residues 930–932 (SRL).

The protein belongs to the peptidase S16 family.

The protein resides in the peroxisome matrix. It carries out the reaction Hydrolysis of proteins in presence of ATP.. Functionally, ATP-dependent serine protease that mediates the selective degradation of misfolded and unassembled polypeptides in the peroxisomal matrix. Necessary for type 2 peroxisome targeting signal (PTS2)-containing protein processing and facilitates peroxisome matrix protein import. This is Lon protease homolog 2, peroxisomal from Aspergillus fumigatus (strain ATCC MYA-4609 / CBS 101355 / FGSC A1100 / Af293) (Neosartorya fumigata).